Reading from the N-terminus, the 855-residue chain is Protein translocase subunit SecA (855 aa).

ATP-binding positions include Gln85, 103–107, and Asp492; that span reads GEGKT. Residues 794–845 form a disordered region; sequence AAIHEESSSAAAPGPGQNQPGGPGGPSAGPVAPVRNLDKHGRNELCPCGSGK. A compositionally biased stretch (low complexity) spans 801 to 811; sequence SSAAAPGPGQN. Cys839, Cys841, Cys850, and Cys851 together coordinate Zn(2+).

Belongs to the SecA family. As to quaternary structure, monomer and homodimer. Part of the essential Sec protein translocation apparatus which comprises SecA, SecYEG and auxiliary proteins SecDF. Other proteins may also be involved. Zn(2+) serves as cofactor.

It is found in the cell membrane. The protein resides in the cytoplasm. It carries out the reaction ATP + H2O + cellular proteinSide 1 = ADP + phosphate + cellular proteinSide 2.. In terms of biological role, part of the Sec protein translocase complex. Interacts with the SecYEG preprotein conducting channel. Has a central role in coupling the hydrolysis of ATP to the transfer of proteins into and across the cell membrane, serving as an ATP-driven molecular motor driving the stepwise translocation of polypeptide chains across the membrane. This is Protein translocase subunit SecA from Clostridium beijerinckii (strain ATCC 51743 / NCIMB 8052) (Clostridium acetobutylicum).